A 254-amino-acid polypeptide reads, in one-letter code: PF03932 family protein CutC (254 aa).

This sequence belongs to the CutC family.

It is found in the cytoplasm. This Yersinia pseudotuberculosis serotype I (strain IP32953) protein is PF03932 family protein CutC.